We begin with the raw amino-acid sequence, 282 residues long: High mobility group nucleosome-binding domain-containing protein 5 (282 aa).

A disordered region spans residues 1–282 (MPKRKAAGQG…GKKEEPQSIV (282 aa)). Thr-31 is subject to Phosphothreonine. Residues 37–46 (KRTSSSRKMK) show a composition bias toward basic residues. Residue Lys-67 forms a Glycyl lysine isopeptide (Lys-Gly) (interchain with G-Cter in SUMO2) linkage. A Phosphotyrosine modification is found at Tyr-76. A compositionally biased stretch (basic and acidic residues) spans 81-119 (KNGEAKITEAPASEKEIVEVKEENIEDATEKGGEKKEAV). Ser-93 is modified (phosphoserine). Lys-101 is covalently cross-linked (Glycyl lysine isopeptide (Lys-Gly) (interchain with G-Cter in SUMO1); alternate). Lys-101 is covalently cross-linked (Glycyl lysine isopeptide (Lys-Gly) (interchain with G-Cter in SUMO2); alternate). Residue Lys-124 forms a Glycyl lysine isopeptide (Lys-Gly) (interchain with G-Cter in SUMO2) linkage. A compositionally biased stretch (acidic residues) spans 125-138 (NEEEDQKEDEEDQN). Basic and acidic residues-rich tracts occupy residues 139–152 (EEKG…KDEK) and 158–256 (KEDK…KEDL). Residues 257-270 (KEEEEGKEEDEIKE) are compositionally biased toward acidic residues. Over residues 271–282 (DDGKKEEPQSIV) the composition is skewed to basic and acidic residues.

It belongs to the HMGN family. In terms of tissue distribution, ubiquitously expressed.

Its subcellular location is the nucleus. Preferentially binds to euchromatin and modulates cellular transcription by counteracting linker histone-mediated chromatin compaction. In Homo sapiens (Human), this protein is High mobility group nucleosome-binding domain-containing protein 5 (HMGN5).